The sequence spans 889 residues: Cytoplasmic aconitate hydratase (889 aa).

Substrate contacts are provided by residues Gln86 and 205–207; that span reads DSH. Cys437, Cys503, and Cys506 together coordinate [4Fe-4S] cluster. Residues Arg536 and Arg541 each coordinate substrate. The residue at position 628 (Thr628) is a Phosphothreonine. Residues Arg699 and 779–780 contribute to the substrate site; that span reads SR.

It belongs to the aconitase/IPM isomerase family. Interacts (when associated with the 4Fe-4S) with FBXL5. Interacts with frataxin(81-210). The cofactor is [4Fe-4S] cluster.

It is found in the cytoplasm. It localises to the cytosol. The enzyme catalyses citrate = D-threo-isocitrate. In terms of biological role, bifunctional iron sensor that switches between 2 activities depending on iron availability. Iron deprivation, promotes its mRNA binding activity through which it regulates the expression of genes involved in iron uptake, sequestration and utilization. Binds to iron-responsive elements (IRES) in the untranslated region of target mRNAs preventing for instance the translation of ferritin and aminolevulinic acid synthase and stabilizing the transferrin receptor mRNA. Functionally, conversely, when cellular iron levels are high, binds a 4Fe-4S cluster which precludes RNA binding activity and promotes the aconitase activity, the isomerization of citrate to isocitrate via cis-aconitate. The chain is Cytoplasmic aconitate hydratase (ACO1) from Homo sapiens (Human).